Reading from the N-terminus, the 100-residue chain is Integration host factor subunit alpha (100 aa).

It belongs to the bacterial histone-like protein family. As to quaternary structure, heterodimer of an alpha and a beta chain.

This protein is one of the two subunits of integration host factor, a specific DNA-binding protein that functions in genetic recombination as well as in transcriptional and translational control. The protein is Integration host factor subunit alpha of Ruegeria sp. (strain TM1040) (Silicibacter sp.).